A 352-amino-acid polypeptide reads, in one-letter code: MAEKKKIGILGASGYTGAELVRLLLRHPRVEIVLLTADRRAGHKMGDVFPQFAPYDLPQLVSIDSVDWAAAKLDLVFCALPHATTQTVLKDLLSKAPETKVVDLSADFRLQDPAVYAKWYGHEHHALDLQQEAVYGLTEIYRRDVKKARLVANPGCYTTCAQLPLIPLLKAKAIESDEIVIDAKSGMTGAGRSAKEEMLFSEVSEGFHAYGVGHHRHMSELDQEFSKAAGKDVLVTFTPHLTPMNRGIYSTIYVRGRRGKTARDLHETLSKQYEKDPFVYVLPFGKTPNSRHVRGSNMTFIGVAEDRKPGRAIIVSTLDNLTKGASGQAVQNMNVMLGFAETLGLDQPALSS.

Residue C156 is part of the active site.

The protein belongs to the NAGSA dehydrogenase family. Type 1 subfamily.

It localises to the cytoplasm. It catalyses the reaction N-acetyl-L-glutamate 5-semialdehyde + phosphate + NADP(+) = N-acetyl-L-glutamyl 5-phosphate + NADPH + H(+). Its pathway is amino-acid biosynthesis; L-arginine biosynthesis; N(2)-acetyl-L-ornithine from L-glutamate: step 3/4. In terms of biological role, catalyzes the NADPH-dependent reduction of N-acetyl-5-glutamyl phosphate to yield N-acetyl-L-glutamate 5-semialdehyde. This chain is N-acetyl-gamma-glutamyl-phosphate reductase, found in Afipia carboxidovorans (strain ATCC 49405 / DSM 1227 / KCTC 32145 / OM5) (Oligotropha carboxidovorans).